Reading from the N-terminus, the 170-residue chain is Protein ripply3 (170 aa).

Positions W40–W43 match the WRPW motif motif. The segment at H79–Y114 is ripply homology domain. The segment covering V143 to N152 has biased composition (polar residues). Residues V143–A170 form a disordered region.

Belongs to the ripply family. Interacts with tbx1 and tle4/grg4.

The protein localises to the nucleus. Functionally, acts as a transcriptional corepressor. Negative regulator of the transcriptional activity of tbx1 that plays a key role in pharyngeal development. Plays a role in the formation of the anteroposterior (AP) axis during embryonic development; required to establish the posterolateral border of the pre-placodal ectoderm (PPE) acting downstream of the retinoic acid receptor (RAR) signaling. The polypeptide is Protein ripply3 (Xenopus tropicalis (Western clawed frog)).